The chain runs to 354 residues: Protein-glutamate methylesterase/protein-glutamine glutaminase 2 (354 aa).

The 118-residue stretch at 5-122 (RVLIVDDSAL…SLKIKEVAEE (118 aa)) folds into the Response regulatory domain. Aspartate 56 carries the post-translational modification 4-aspartylphosphate. Residues 159-354 (PDTSFKKLIL…IADRIVELVR (196 aa)) enclose the CheB-type methylesterase domain. Catalysis depends on residues serine 172, histidine 199, and aspartate 298.

Belongs to the CheB family. Post-translationally, phosphorylated by CheA. Phosphorylation of the N-terminal regulatory domain activates the methylesterase activity.

The protein resides in the cytoplasm. It catalyses the reaction [protein]-L-glutamate 5-O-methyl ester + H2O = L-glutamyl-[protein] + methanol + H(+). It carries out the reaction L-glutaminyl-[protein] + H2O = L-glutamyl-[protein] + NH4(+). Its function is as follows. Involved in chemotaxis. Part of a chemotaxis signal transduction system that modulates chemotaxis in response to various stimuli. Catalyzes the demethylation of specific methylglutamate residues introduced into the chemoreceptors (methyl-accepting chemotaxis proteins or MCP) by CheR. Also mediates the irreversible deamidation of specific glutamine residues to glutamic acid. In Carboxydothermus hydrogenoformans (strain ATCC BAA-161 / DSM 6008 / Z-2901), this protein is Protein-glutamate methylesterase/protein-glutamine glutaminase 2.